The primary structure comprises 368 residues: tRNA-specific 2-thiouridylase MnmA (368 aa).

Residues 11 to 18 (GMSGGVDS) and methionine 37 contribute to the ATP site. Residues 97–99 (NPD) are interaction with target base in tRNA. The active-site Nucleophile is the cysteine 102. Cysteine 102 and cysteine 199 are disulfide-bonded. Glycine 127 contributes to the ATP binding site. Residues 149–151 (KDQ) are interaction with tRNA. Catalysis depends on cysteine 199, which acts as the Cysteine persulfide intermediate. An interaction with tRNA region spans residues 311–312 (RY).

Belongs to the MnmA/TRMU family. As to quaternary structure, interacts with TusE.

The protein resides in the cytoplasm. The catalysed reaction is S-sulfanyl-L-cysteinyl-[protein] + uridine(34) in tRNA + AH2 + ATP = 2-thiouridine(34) in tRNA + L-cysteinyl-[protein] + A + AMP + diphosphate + H(+). Functionally, catalyzes the 2-thiolation of uridine at the wobble position (U34) of tRNA(Lys), tRNA(Glu) and tRNA(Gln), leading to the formation of s(2)U34, the first step of tRNA-mnm(5)s(2)U34 synthesis. Sulfur is provided by IscS, via a sulfur-relay system. Binds ATP and its substrate tRNAs. The protein is tRNA-specific 2-thiouridylase MnmA of Shigella flexneri serotype 5b (strain 8401).